Consider the following 259-residue polypeptide: Sugar fermentation stimulation protein homolog (259 aa).

It belongs to the SfsA family.

The protein is Sugar fermentation stimulation protein homolog of Chloroflexus aurantiacus (strain ATCC 29364 / DSM 637 / Y-400-fl).